A 671-amino-acid chain; its full sequence is tRNA 5-methylaminomethyl-2-thiouridine biosynthesis bifunctional protein MnmC (671 aa).

A tRNA (mnm(5)s(2)U34)-methyltransferase region spans residues 1–245; the sequence is MVNVMNTLSF…KREMLWGEKP (245 aa). The FAD-dependent cmnm(5)s(2)U34 oxidoreductase stretch occupies residues 272–671; sequence VGGGVASLFV…RKLLKGSKVE (400 aa).

The protein in the N-terminal section; belongs to the methyltransferase superfamily. tRNA (mnm(5)s(2)U34)-methyltransferase family. In the C-terminal section; belongs to the DAO family. It depends on FAD as a cofactor.

It is found in the cytoplasm. It carries out the reaction 5-aminomethyl-2-thiouridine(34) in tRNA + S-adenosyl-L-methionine = 5-methylaminomethyl-2-thiouridine(34) in tRNA + S-adenosyl-L-homocysteine + H(+). Its function is as follows. Catalyzes the last two steps in the biosynthesis of 5-methylaminomethyl-2-thiouridine (mnm(5)s(2)U) at the wobble position (U34) in tRNA. Catalyzes the FAD-dependent demodification of cmnm(5)s(2)U34 to nm(5)s(2)U34, followed by the transfer of a methyl group from S-adenosyl-L-methionine to nm(5)s(2)U34, to form mnm(5)s(2)U34. The sequence is that of tRNA 5-methylaminomethyl-2-thiouridine biosynthesis bifunctional protein MnmC from Actinobacillus pleuropneumoniae serotype 3 (strain JL03).